Here is a 245-residue protein sequence, read N- to C-terminus: Probable transcriptional regulatory protein Aflv_0709 (245 aa).

The span at 1-14 shows a compositional bias: basic residues; that stretch reads MAGHSKWKNIQRRK. The interval 1–21 is disordered; the sequence is MAGHSKWKNIQRRKNAQDAKR.

It belongs to the TACO1 family.

The protein localises to the cytoplasm. The sequence is that of Probable transcriptional regulatory protein Aflv_0709 from Anoxybacillus flavithermus (strain DSM 21510 / WK1).